Consider the following 90-residue polypeptide: Large ribosomal subunit protein bL27 (90 aa).

Residues 1–22 (MAHKKAGGSTRNGRDSNPKMLG) form a disordered region.

This sequence belongs to the bacterial ribosomal protein bL27 family.

In Coxiella burnetii (strain CbuK_Q154) (Coxiella burnetii (strain Q154)), this protein is Large ribosomal subunit protein bL27.